Consider the following 289-residue polypeptide: ATP synthase gamma chain (289 aa).

It belongs to the ATPase gamma chain family. In terms of assembly, F-type ATPases have 2 components, CF(1) - the catalytic core - and CF(0) - the membrane proton channel. CF(1) has five subunits: alpha(3), beta(3), gamma(1), delta(1), epsilon(1). CF(0) has three main subunits: a, b and c.

The protein localises to the cell inner membrane. In terms of biological role, produces ATP from ADP in the presence of a proton gradient across the membrane. The gamma chain is believed to be important in regulating ATPase activity and the flow of protons through the CF(0) complex. This is ATP synthase gamma chain from Histophilus somni (strain 129Pt) (Haemophilus somnus).